A 978-amino-acid polypeptide reads, in one-letter code: Rab3 GTPase-activating protein catalytic subunit (978 aa).

3 disordered regions span residues 533–554 (EGKK…TASD), 586–621 (HSDT…RLHQ), and 908–936 (EEEP…GREL). A compositionally biased stretch (polar residues) spans 540 to 554 (LYSSSESSVNKTASD). Composition is skewed to basic and acidic residues over residues 586–619 (HSDT…EGRL) and 909–922 (EEPK…DRRQ).

Belongs to the Rab3-GAP catalytic subunit family. As to quaternary structure, the Rab3 GTPase-activating complex is a heterodimer composed of rab3gap1 and rab3gap2. The Rab3 GTPase-activating complex interacts with DMXL2. Interacts with LMAN1.

It is found in the cytoplasm. The protein resides in the endoplasmic reticulum. Its subcellular location is the golgi apparatus. The protein localises to the cis-Golgi network. Functionally, catalytic subunit of the Rab3 GTPase-activating (Rab3GAP) complex composed of rab3gap1 and rab3gap2, which has GTPase-activating protein (GAP) activity towards various Rab3 subfamily members (RAB3A, RAB3B, RAB3C and RAB3D), RAB5A and RAB43, and guanine nucleotide exchange factor (GEF) activity towards RAB18. As part of the Rab3GAP complex, acts as a GAP for Rab3 proteins by converting active RAB3-GTP to the inactive form RAB3-GDP. Rab3 proteins are involved in regulated exocytosis of neurotransmitters and hormones. The Rab3GAP complex, acts as a GEF for RAB18 by promoting the conversion of inactive RAB18-GDP to the active form RAB18-GTP. Recruits and stabilizes RAB18 at the cis-Golgi membrane where RAB18 is most likely activated. Also involved in RAB18 recruitment at the endoplasmic reticulum (ER) membrane where it maintains proper ER structure. Required for normal eye and brain development. May participate in neurodevelopmental processes such as proliferation, migration and differentiation before synapse formation, and non-synaptic vesicular release of neurotransmitters. The chain is Rab3 GTPase-activating protein catalytic subunit (rab3gap1) from Xenopus laevis (African clawed frog).